A 312-amino-acid chain; its full sequence is Fe-S cluster assembly protein DRE2 (312 aa).

The segment at 7–139 is N-terminal SAM-like domain; it reads LSDVPRVLLL…VKPVFEEQSV (133 aa). Positions 140-204 are linker; sequence LLPFSINRSQ…EDELINEDEL (65 aa). Residues C214, C225, C228, and C230 each coordinate [2Fe-2S] cluster. Residues 214 to 230 form a fe-S binding site A region; the sequence is CRPKAGKRRRACKDCTC. Positions 275, 278, 286, and 289 each coordinate [4Fe-4S] cluster. 2 consecutive short sequence motifs (cx2C motif) follow at residues 275 to 278 and 286 to 289; these read CGNC and CDGC. The fe-S binding site B stretch occupies residues 275–289; sequence CGNCSLGDAFRCDGC.

It belongs to the anamorsin family. In terms of assembly, monomer. Interacts with TAH18. Interacts with MIA40. It depends on [2Fe-2S] cluster as a cofactor. The cofactor is [4Fe-4S] cluster.

It localises to the cytoplasm. The protein localises to the mitochondrion intermembrane space. In terms of biological role, component of the cytosolic iron-sulfur (Fe-S) protein assembly (CIA) machinery required for the maturation of extramitochondrial Fe-S proteins. Part of an electron transfer chain functioning in an early step of cytosolic Fe-S biogenesis, facilitating the de novo assembly of a [4Fe-4S] cluster on the scaffold complex CFD1-NBP35. Electrons are transferred to DRE2 from NADPH via the FAD- and FMN-containing protein TAH18. TAH18-DRE2 are also required for the assembly of the diferric tyrosyl radical cofactor of ribonucleotide reductase (RNR), probably by providing electrons for reduction during radical cofactor maturation in the catalytic small subunit RNR2. In Arthroderma otae (strain ATCC MYA-4605 / CBS 113480) (Microsporum canis), this protein is Fe-S cluster assembly protein DRE2.